A 347-amino-acid polypeptide reads, in one-letter code: MATVTSNASPKSFSFTVSNPFKTLIPNKSPSLCYPTRNKNHHRLGFSIKATVSTPPSIATGNAPSPDYRVEILSESLPFIQKFRGKTIVVKYGGAAMTSPELKSSVVSDLVLLACVGLRPILVHGGGPDINRYLKQLNIPAEFRDGLRVTDATTMEIVSMVLVGKVNKNLVSLINAAGATAVGLSGHDGRLLTARPVPNSAQLGFVGEVARVDPSVLRPLVDYGYIPVIASVAADDSGQAYNINADTVAGELAAALGAEKLILLTDVAGILENKEDPSSLIKEIDIKGVKKMIEDGKVAGGMIPKVKCCIRSLAQGVKTASIIDGRRQHSLLHEIMSDEGAGTMITG.

A chloroplast-targeting transit peptide spans Met-1–Ala-50. Thr-51 carries the post-translational modification N-acetylthreonine. ATP is bound at residue Gly-94–Ala-95. N-acetyl-L-glutamate is bound by residues Gly-126, Arg-148, and Asn-242 to Ala-245. L-arginine is bound at residue Lys-260. ATP contacts are provided by residues Thr-265–Asp-266 and Leu-271. Lys-282 contacts L-arginine. An ATP-binding site is contributed by Lys-297 to Lys-305. Residues Glu-334–Ser-337 and Gly-342 each bind L-arginine.

This sequence belongs to the acetylglutamate kinase family. ArgB subfamily. In terms of assembly, interacts with GLB1. Interaction is dependent of MgATP and inhibited by 2-oxoglutarate, arginine, glutamate, citrate, and oxaloacetate.

Its subcellular location is the plastid. The protein localises to the chloroplast stroma. The enzyme catalyses N-acetyl-L-glutamate + ATP = N-acetyl-L-glutamyl 5-phosphate + ADP. It participates in amino-acid biosynthesis; L-arginine biosynthesis; N(2)-acetyl-L-ornithine from L-glutamate: step 2/4. Its activity is regulated as follows. Inhibited by arginine. Inhibition is relieved by binding to GLB1. Its function is as follows. Involved in the arginine biosynthetic pathway via the intermediate compound ornithine. The protein is Acetylglutamate kinase, chloroplastic of Arabidopsis thaliana (Mouse-ear cress).